A 252-amino-acid chain; its full sequence is 5-oxoprolinase subunit A 1 (252 aa).

It belongs to the LamB/PxpA family. In terms of assembly, forms a complex composed of PxpA, PxpB and PxpC.

The catalysed reaction is 5-oxo-L-proline + ATP + 2 H2O = L-glutamate + ADP + phosphate + H(+). Catalyzes the cleavage of 5-oxoproline to form L-glutamate coupled to the hydrolysis of ATP to ADP and inorganic phosphate. The protein is 5-oxoprolinase subunit A 1 of Pseudomonas aeruginosa (strain ATCC 15692 / DSM 22644 / CIP 104116 / JCM 14847 / LMG 12228 / 1C / PRS 101 / PAO1).